The following is an 80-amino-acid chain: MTHVLSAAANDLIACVLRDNLFSADGECLRYVVCKEAGHVESVYIGEIGAAQAHSGDQNAVLDASSASDVSSSASSRRVS.

This sequence belongs to the baculoviridae LEF-10 family.

Its function is as follows. Involved in late/very late gene activation. The sequence is that of Late expression factor 10 (LEF-10) from Orgyia pseudotsugata multicapsid polyhedrosis virus (OpMNPV).